Reading from the N-terminus, the 257-residue chain is Nopaline permease ATP-binding protein P (257 aa).

The 246-residue stretch at 8–253 (LVAEDVHKNF…PTSPRCRAFL (246 aa)) folds into the ABC transporter domain. 40 to 47 (GSSGSGKS) serves as a coordination point for ATP.

The protein belongs to the ABC transporter superfamily.

The protein localises to the cell inner membrane. Its function is as follows. Component of the nopaline active transport system probably consisting of four subunits: Q, M, P and T. This system is also capable of transporting octopine provided that catabolic functions are induced with nopaline. The polypeptide is Nopaline permease ATP-binding protein P (nocP) (Agrobacterium fabrum (strain C58 / ATCC 33970) (Agrobacterium tumefaciens (strain C58))).